The sequence spans 333 residues: Ketol-acid reductoisomerase (NADP(+)) (333 aa).

The region spanning A2–T182 is the KARI N-terminal Rossmann domain. NADP(+) is bound by residues Y25–Q28, S51, S53, and D83–Q86. Residue H108 is part of the active site. G134 lines the NADP(+) pocket. The KARI C-terminal knotted domain maps to T183 to S328. Residues D191, E195, E227, and E231 each contribute to the Mg(2+) site. S252 contacts substrate.

The protein belongs to the ketol-acid reductoisomerase family. It depends on Mg(2+) as a cofactor.

The enzyme catalyses (2R)-2,3-dihydroxy-3-methylbutanoate + NADP(+) = (2S)-2-acetolactate + NADPH + H(+). It carries out the reaction (2R,3R)-2,3-dihydroxy-3-methylpentanoate + NADP(+) = (S)-2-ethyl-2-hydroxy-3-oxobutanoate + NADPH + H(+). It functions in the pathway amino-acid biosynthesis; L-isoleucine biosynthesis; L-isoleucine from 2-oxobutanoate: step 2/4. The protein operates within amino-acid biosynthesis; L-valine biosynthesis; L-valine from pyruvate: step 2/4. In terms of biological role, involved in the biosynthesis of branched-chain amino acids (BCAA). Catalyzes an alkyl-migration followed by a ketol-acid reduction of (S)-2-acetolactate (S2AL) to yield (R)-2,3-dihydroxy-isovalerate. In the isomerase reaction, S2AL is rearranged via a Mg-dependent methyl migration to produce 3-hydroxy-3-methyl-2-ketobutyrate (HMKB). In the reductase reaction, this 2-ketoacid undergoes a metal-dependent reduction by NADPH to yield (R)-2,3-dihydroxy-isovalerate. This is Ketol-acid reductoisomerase (NADP(+)) from Alkaliphilus metalliredigens (strain QYMF).